The primary structure comprises 679 residues: MTKDLLLELGLEELPAYVVTPSEKQLGQKMVKFLEDHRLSFETVQTFSTPRRLAVRVKGLADQQTDLTEDFKGPSKKIALDAEGNFSKAAQGFVRGKGLSVDDIEFREVKGEEYVYVTKHETGKSAIDVLASVTEVLTELTFPVNMHWANNSFEYIRPVHTLVVLLDDQALELDFLDIHSGRISRGHRFLGSDTEISSASSYEDDLRQQFVIADAKERQQMIVNQIHAIEEKKNISVEIDEDLLNEVLNLVEYPTAFLGSFDEKYLDVPEEVLVTSMKNHQRYFVVRDRDGKLLPNFISVRNGNAEHIENVIKGNEKVLVARLEDGEFFWQEDQKLNIADLVEKLKQVTFHEKIGSLYEHMDRVKVISQYLAEKADLSDEEKLAVLRAASIYKFDLLTGMVDEFDELQGIMGEKYALLAGEQPAVAAAIREHYMPTSADGELPETRVGAILALADKFDTLLSFFSVGLIPSGSNDPYALRRATQGIVRILEAFGWDIPLDELVTNLYGLSFASLDYANQKEVMAFISARIEKMIGSKVPKDIREAVLESDTYIVSLILEASQALVQKSKDAQYKVSVESLSRAFNLAEKVTHSVLVDSSLFENNQEKALYQAILSLELTEDMHDNLDKLFALSPIINDFFDNTMVMTDDEKMKQNRLALLNSLVAKARTVAAFNLLNTK.

This sequence belongs to the class-II aminoacyl-tRNA synthetase family. In terms of assembly, tetramer of two alpha and two beta subunits.

The protein localises to the cytoplasm. It carries out the reaction tRNA(Gly) + glycine + ATP = glycyl-tRNA(Gly) + AMP + diphosphate. The protein is Glycine--tRNA ligase beta subunit of Streptococcus agalactiae serotype Ia (strain ATCC 27591 / A909 / CDC SS700).